The sequence spans 326 residues: Protein phosphatase 1 regulatory subunit SDS22 homolog (326 aa).

The tract at residues 1–22 (MSNDKSAEVVVLPRENDEESKE) is disordered. LRR repeat units follow at residues 35–57 (DIDSPEIDLTHTRADHIPDLTGF), 58–80 (PKIEELRMRNNLLVSISPTISSL), 81–102 (VTLTSLDLYENQLTEISHLESL), 103–126 (VNLVSLDLSYNRIRQINGLDKLTK), 128–146 (ETLYLVSNKIEKIENLEAL), 147–170 (TQLKLLELGDNRIKKIENIGHLVN), 172–190 (DELFIGKNKIRQLEGVETL), 191–212 (QKLSVLSLPGNRIVKIENVEQL), 213–236 (NNLKELYLSDQGLQDIHGVEPLTN), 238–256 (LLLDVANNEIKTFSGVERL), 257–280 (ESLNDFWANDNKVESFSEIEQLSK), and 281–304 (LKGLQTVYLERNPFYFNDTNQYRR).

Belongs to the SDS22 family.

The protein localises to the nucleus. Its function is as follows. Regulatory subunit of protein phosphatase 1. The sequence is that of Protein phosphatase 1 regulatory subunit SDS22 homolog (sds-22) from Caenorhabditis elegans.